The primary structure comprises 150 residues: Monothiol glutaredoxin-S13 (150 aa).

A disordered region spans residues 30–52 (PSSSSSSLSWLTSGSPKPTSISN). Low complexity predominate over residues 31-44 (SSSSSSLSWLTSGS). The Glutaredoxin domain occupies 53–149 (KRSSNLVVME…PTLRQAGALW (97 aa)). Cys-73 lines the [2Fe-2S] cluster pocket. The Responsive for interaction with TGA factors motif lies at 147-150 (ALWL).

It belongs to the glutaredoxin family. CC-type subfamily.

Its subcellular location is the cytoplasm. The protein resides in the nucleus. May only reduce GSH-thiol disulfides, but not protein disulfides. This Arabidopsis thaliana (Mouse-ear cress) protein is Monothiol glutaredoxin-S13 (GRXS13).